Reading from the N-terminus, the 305-residue chain is Sulfate adenylyltransferase subunit 2 (305 aa).

It belongs to the PAPS reductase family. CysD subfamily. In terms of assembly, heterodimer composed of CysD, the smaller subunit, and CysN.

It catalyses the reaction sulfate + ATP + H(+) = adenosine 5'-phosphosulfate + diphosphate. It participates in sulfur metabolism; hydrogen sulfide biosynthesis; sulfite from sulfate: step 1/3. Functionally, with CysN forms the ATP sulfurylase (ATPS) that catalyzes the adenylation of sulfate producing adenosine 5'-phosphosulfate (APS) and diphosphate, the first enzymatic step in sulfur assimilation pathway. APS synthesis involves the formation of a high-energy phosphoric-sulfuric acid anhydride bond driven by GTP hydrolysis by CysN coupled to ATP hydrolysis by CysD. The polypeptide is Sulfate adenylyltransferase subunit 2 (Pseudomonas fluorescens (strain ATCC BAA-477 / NRRL B-23932 / Pf-5)).